The sequence spans 467 residues: 6-phosphogluconate dehydrogenase, decarboxylating (467 aa).

NADP(+)-binding positions include 9–14 (GLGVMG), 32–34 (NYT), 73–75 (VTA), and Asn-101. Residues Asn-101 and 127 to 129 (SGG) contribute to the substrate site. Lys-181 serves as the catalytic Proton acceptor. 184–185 (HN) lines the substrate pocket. Glu-188 (proton donor) is an active-site residue. The substrate site is built by Tyr-189, Lys-259, Arg-286, and His-451.

The protein belongs to the 6-phosphogluconate dehydrogenase family. As to quaternary structure, homodimer.

It catalyses the reaction 6-phospho-D-gluconate + NADP(+) = D-ribulose 5-phosphate + CO2 + NADPH. It participates in carbohydrate degradation; pentose phosphate pathway; D-ribulose 5-phosphate from D-glucose 6-phosphate (oxidative stage): step 3/3. Functionally, catalyzes the oxidative decarboxylation of 6-phosphogluconate to ribulose 5-phosphate and CO(2), with concomitant reduction of NADP to NADPH. The chain is 6-phosphogluconate dehydrogenase, decarboxylating (gntZ) from Bacillus licheniformis.